A 544-amino-acid polypeptide reads, in one-letter code: Chaperonin GroEL (544 aa).

ATP contacts are provided by residues Thr-29–Pro-32, Asp-86–Thr-90, Gly-413, Asp-477–Leu-479, and Asp-493.

This sequence belongs to the chaperonin (HSP60) family. As to quaternary structure, forms a cylinder of 14 subunits composed of two heptameric rings stacked back-to-back. Interacts with the co-chaperonin GroES.

It localises to the cytoplasm. It carries out the reaction ATP + H2O + a folded polypeptide = ADP + phosphate + an unfolded polypeptide.. Functionally, together with its co-chaperonin GroES, plays an essential role in assisting protein folding. The GroEL-GroES system forms a nano-cage that allows encapsulation of the non-native substrate proteins and provides a physical environment optimized to promote and accelerate protein folding. This Clostridium kluyveri (strain NBRC 12016) protein is Chaperonin GroEL.